We begin with the raw amino-acid sequence, 806 residues long: Protein translocase subunit SecA 2 (806 aa).

ATP contacts are provided by residues Gln-122, 140–144 (GEGKT), and Asp-533.

The protein belongs to the SecA family. In terms of assembly, monomer and homodimer. Part of the essential Sec protein translocation apparatus which comprises SecA, SecYEG and auxiliary proteins SecDF. Other proteins may also be involved.

The protein localises to the cell membrane. The protein resides in the cytoplasm. The enzyme catalyses ATP + H2O + cellular proteinSide 1 = ADP + phosphate + cellular proteinSide 2.. Its function is as follows. Part of the Sec protein translocase complex. Interacts with the SecYEG preprotein conducting channel. Has a central role in coupling the hydrolysis of ATP to the transfer of proteins into and across the cell membrane, serving as an ATP-driven molecular motor driving the stepwise translocation of polypeptide chains across the membrane. The polypeptide is Protein translocase subunit SecA 2 (Mycobacterium ulcerans (strain Agy99)).